The sequence spans 372 residues: GDP-mannose 4,6 dehydratase (372 aa).

The interval 1–20 is disordered; it reads MAHAPARCPSARGSGDGEMG. Ala-2 bears the N-acetylalanine mark. NADP(+)-binding positions include 30-35, 55-58, 86-87, 108-112, and Tyr-123; these read GITGQD, RRSS, DL, and LGAQS. Thr-155 is an active-site residue. Residues Glu-157 and Tyr-179 each act as nucleophile in the active site. The NADP(+) site is built by Lys-183, His-209, and Arg-214. Residue Tyr-323 is modified to Phosphotyrosine.

It belongs to the NAD(P)-dependent epimerase/dehydratase family. GDP-mannose 4,6-dehydratase subfamily. It depends on NADP(+) as a cofactor. In terms of tissue distribution, highly expressed in pancreas and small intestine. Expressed in thymus, protstate, colon, heart, placenta, liver and kidney. Expressed at low levels in spleen, testis, brain and lung.

It carries out the reaction GDP-alpha-D-mannose = GDP-4-dehydro-alpha-D-rhamnose + H2O. It functions in the pathway nucleotide-sugar biosynthesis; GDP-L-fucose biosynthesis via de novo pathway; GDP-L-fucose from GDP-alpha-D-mannose: step 1/2. Its activity is regulated as follows. Inhibited by GDP-fucose. Functionally, catalyzes the conversion of GDP-D-mannose to GDP-4-dehydro-6-deoxy-D-mannose. The polypeptide is GDP-mannose 4,6 dehydratase (Homo sapiens (Human)).